Consider the following 906-residue polypeptide: Protein translocase subunit SecA (906 aa).

ATP-binding positions include glutamine 89, 107–111 (GEGKT), and aspartate 502. Residues cysteine 885, cysteine 887, cysteine 896, and histidine 897 each coordinate Zn(2+).

This sequence belongs to the SecA family. As to quaternary structure, monomer and homodimer. Part of the essential Sec protein translocation apparatus which comprises SecA, SecYEG and auxiliary proteins SecDF-YajC and YidC. It depends on Zn(2+) as a cofactor.

It localises to the cell inner membrane. Its subcellular location is the cytoplasm. It catalyses the reaction ATP + H2O + cellular proteinSide 1 = ADP + phosphate + cellular proteinSide 2.. In terms of biological role, part of the Sec protein translocase complex. Interacts with the SecYEG preprotein conducting channel. Has a central role in coupling the hydrolysis of ATP to the transfer of proteins into and across the cell membrane, serving both as a receptor for the preprotein-SecB complex and as an ATP-driven molecular motor driving the stepwise translocation of polypeptide chains across the membrane. The chain is Protein translocase subunit SecA from Rhizobium rhizogenes (strain K84 / ATCC BAA-868) (Agrobacterium radiobacter).